Here is a 386-residue protein sequence, read N- to C-terminus: AT-hook motif nuclear-localized protein 8 (386 aa).

2 disordered regions span residues 1–175 and 303–372; these read MDSR…LGGT and KQSS…LHPH. The segment covering 54–70 has biased composition (low complexity); that stretch reads QQQSQTFHQQQQQQMDQ. The segment covering 101-110 has biased composition (basic residues); sequence VKKKRGRPRK. Positions 102–110 match the Bipartite nuclear localization signal motif; that stretch reads KKKRGRPRK. A DNA-binding region (a.T hook 1) is located at residues 102-114; sequence KKKRGRPRKYTPD. Polar residues predominate over residues 126–135; it reads PLLSAASNSY. Gly residues predominate over residues 136–147; that stretch reads GEGGVGDSGGNG. Positions 155–167 form a DNA-binding region, a.T hook 2; sequence KRNRGRPPGSSKK. Residues 174-316 form the PPC domain; it reads GTSGVGFTPH…VNIARGQNPE (143 aa). 2 stretches are compositionally biased toward low complexity: residues 328–337 and 361–372; these read GSVSQGPSSE and QQQQQQQPLHPH.

The protein localises to the nucleus. Its function is as follows. Transcription factor that specifically binds AT-rich DNA sequences related to the nuclear matrix attachment regions (MARs). This chain is AT-hook motif nuclear-localized protein 8, found in Arabidopsis thaliana (Mouse-ear cress).